Reading from the N-terminus, the 23-residue chain is Acidic phospholipase A2 Cvv-E6c (23 aa).

It depends on Ca(2+) as a cofactor. In terms of processing, contains 7 disulfide bonds. As to expression, expressed by the venom gland.

It is found in the secreted. It carries out the reaction a 1,2-diacyl-sn-glycero-3-phosphocholine + H2O = a 1-acyl-sn-glycero-3-phosphocholine + a fatty acid + H(+). Functionally, snake venom phospholipase A2 (PLA2) that significantly inhibits ADP-induced platelet aggregation in platelet-rich plasma of human, rabbit and guinea pig. PLA2 catalyzes the calcium-dependent hydrolysis of the 2-acyl groups in 3-sn-phosphoglycerides. The chain is Acidic phospholipase A2 Cvv-E6c from Crotalus viridis viridis (Prairie rattlesnake).